Here is a 210-residue protein sequence, read N- to C-terminus: Small ribosomal subunit protein uS5 (210 aa).

The segment covering 1-11 (MTQPNTQTTPN) has biased composition (polar residues). Positions 1 to 56 (MTQPNTQTTPNDVPAAAEGQHQEQQQQQRRGGGRERRGGGRRGDRRGQERDSEWQE) are disordered. A compositionally biased stretch (low complexity) spans 18 to 29 (EGQHQEQQQQQR). Over residues 32–56 (GGRERRGGGRRGDRRGQERDSEWQE) the composition is skewed to basic and acidic residues. In terms of domain architecture, S5 DRBM spans 54–117 (WQERVVQIRR…ADGKKHLVKV (64 aa)).

The protein belongs to the universal ribosomal protein uS5 family. Part of the 30S ribosomal subunit. Contacts proteins S4 and S8.

Its function is as follows. With S4 and S12 plays an important role in translational accuracy. Functionally, located at the back of the 30S subunit body where it stabilizes the conformation of the head with respect to the body. The polypeptide is Small ribosomal subunit protein uS5 (Prochlorococcus marinus (strain MIT 9303)).